Reading from the N-terminus, the 403-residue chain is JmjC domain-containing histone demethylation protein 1 (403 aa).

In terms of domain architecture, JmjC spans 141–328 (WSLREWCNYF…QQLKIVDVEK (188 aa)). T221 provides a ligand contact to substrate. Fe cation contacts are provided by H224 and D226. K241 is a substrate binding site. Position 296 (H296) interacts with Fe cation.

Belongs to the JHDM1 histone demethylase family. The cofactor is Fe(2+).

The protein localises to the nucleus. The catalysed reaction is N(6),N(6)-dimethyl-L-lysyl(36)-[histone H3] + 2 2-oxoglutarate + 2 O2 = L-lysyl(36)-[histone H3] + 2 formaldehyde + 2 succinate + 2 CO2. Functionally, histone demethylase that specifically demethylates 'Lys-36' of histone H3, thereby playing a central role in histone code. This chain is JmjC domain-containing histone demethylation protein 1 (JHD1), found in Candida glabrata (strain ATCC 2001 / BCRC 20586 / JCM 3761 / NBRC 0622 / NRRL Y-65 / CBS 138) (Yeast).